A 463-amino-acid polypeptide reads, in one-letter code: GTPase Der (463 aa).

The segment at 1–20 (MDEGDEDLISGRGFTEGARK) is disordered. EngA-type G domains lie at 27–190 (GVLA…KQAE) and 202–375 (RRVA…ESWD). Residues 33 to 40 (GRPNVGKS), 80 to 84 (DTGGW), 142 to 145 (NKID), 208 to 215 (GRPNVGKS), 255 to 259 (DTAGI), and 320 to 323 (NKWD) contribute to the GTP site. One can recognise a KH-like domain in the interval 376–458 (QRIPTGKLNA…PIQISVNIRE (83 aa)).

Belongs to the TRAFAC class TrmE-Era-EngA-EngB-Septin-like GTPase superfamily. EngA (Der) GTPase family. In terms of assembly, associates with the 50S ribosomal subunit.

Its function is as follows. GTPase that plays an essential role in the late steps of ribosome biogenesis. This is GTPase Der from Bifidobacterium longum (strain NCC 2705).